Reading from the N-terminus, the 124-residue chain is Glycine cleavage system H protein (124 aa).

A Lipoyl-binding domain is found at 22-103 (VFVVGITDNA…AYTAWIFKIK (82 aa)). Lys-63 is subject to N6-lipoyllysine.

Belongs to the GcvH family. As to quaternary structure, the glycine cleavage system is composed of four proteins: P, T, L and H. The cofactor is (R)-lipoate.

The glycine cleavage system catalyzes the degradation of glycine. The H protein shuttles the methylamine group of glycine from the P protein to the T protein. The polypeptide is Glycine cleavage system H protein (Bordetella pertussis (strain Tohama I / ATCC BAA-589 / NCTC 13251)).